The sequence spans 102 residues: Thioredoxin (102 aa).

One can recognise a Thioredoxin domain in the interval 2–102; the sequence is LHIDELTFEN…ILIHTINKYL (101 aa). Residues C29 and C32 each act as nucleophile in the active site. A disulfide bridge connects residues C29 and C32.

The protein belongs to the thioredoxin family.

Its subcellular location is the plastid. It localises to the chloroplast. In terms of biological role, participates in various redox reactions through the reversible oxidation of its active center dithiol to a disulfide and catalyzes dithiol-disulfide exchange reactions. In Cyanidioschyzon merolae (strain NIES-3377 / 10D) (Unicellular red alga), this protein is Thioredoxin (trxA).